The sequence spans 1247 residues: Probable phosphorylase b kinase regulatory subunit alpha (1247 aa).

Positions 853-883 (LKGLYEKACQQKLWGLVRHTAGMLGKRVEDL) are calmodulin-binding. Phosphoserine is present on residues S1030 and S1033. The segment at 1052–1089 (DRQGQWLRRRRLDGALNRVPRDFYSRVWTVLEKCQGLA) is calmodulin-binding. The S-farnesyl cysteine moiety is linked to residue C1244.

It belongs to the phosphorylase b kinase regulatory chain family. Although the final Cys may be farnesylated, the terminal tripeptide is probably not removed, and the C-terminus is not methylated.

It localises to the cell membrane. It participates in glycan biosynthesis; glycogen metabolism. Functionally, phosphorylase b kinase catalyzes the phosphorylation of serine in certain substrates, including troponin I. The alpha chain may bind calmodulin. The sequence is that of Probable phosphorylase b kinase regulatory subunit alpha from Drosophila melanogaster (Fruit fly).